Consider the following 187-residue polypeptide: Elongation factor P (187 aa).

It belongs to the elongation factor P family.

It localises to the cytoplasm. It functions in the pathway protein biosynthesis; polypeptide chain elongation. In terms of biological role, involved in peptide bond synthesis. Stimulates efficient translation and peptide-bond synthesis on native or reconstituted 70S ribosomes in vitro. Probably functions indirectly by altering the affinity of the ribosome for aminoacyl-tRNA, thus increasing their reactivity as acceptors for peptidyl transferase. The sequence is that of Elongation factor P from Corynebacterium jeikeium (strain K411).